Reading from the N-terminus, the 143-residue chain is Large ribosomal subunit protein uL16 (143 aa).

Residues 1 to 17 (MLQPKRTKFRKAHKGRI) show a composition bias toward basic residues. The interval 1–21 (MLQPKRTKFRKAHKGRIHGNA) is disordered.

It belongs to the universal ribosomal protein uL16 family. In terms of assembly, part of the 50S ribosomal subunit.

Functionally, binds 23S rRNA and is also seen to make contacts with the A and possibly P site tRNAs. This Rhizorhabdus wittichii (strain DSM 6014 / CCUG 31198 / JCM 15750 / NBRC 105917 / EY 4224 / RW1) (Sphingomonas wittichii) protein is Large ribosomal subunit protein uL16.